The following is a 134-amino-acid chain: MGMLTEFKEFAMRGNVIDLAVGVVIGAAFGKIVTALVEKIIMPPLGMLIGKVDFSQLAWTLSPASIGADGKEIPAVVIGYGDFINTLIQFVIVAFAIFLVIKVINRLSRKQDAAPAAPAEEVVLLREIRDSLKK.

A run of 2 helical transmembrane segments spans residues V16–L36 and I84–I104.

It belongs to the MscL family. In terms of assembly, homopentamer.

Its subcellular location is the cell inner membrane. Its function is as follows. Channel that opens in response to stretch forces in the membrane lipid bilayer. May participate in the regulation of osmotic pressure changes within the cell. The protein is Large-conductance mechanosensitive channel of Stenotrophomonas maltophilia (strain R551-3).